We begin with the raw amino-acid sequence, 572 residues long: Proline--tRNA ligase (572 aa).

This sequence belongs to the class-II aminoacyl-tRNA synthetase family. ProS type 1 subfamily. In terms of assembly, homodimer.

The protein localises to the cytoplasm. It carries out the reaction tRNA(Pro) + L-proline + ATP = L-prolyl-tRNA(Pro) + AMP + diphosphate. Catalyzes the attachment of proline to tRNA(Pro) in a two-step reaction: proline is first activated by ATP to form Pro-AMP and then transferred to the acceptor end of tRNA(Pro). As ProRS can inadvertently accommodate and process non-cognate amino acids such as alanine and cysteine, to avoid such errors it has two additional distinct editing activities against alanine. One activity is designated as 'pretransfer' editing and involves the tRNA(Pro)-independent hydrolysis of activated Ala-AMP. The other activity is designated 'posttransfer' editing and involves deacylation of mischarged Ala-tRNA(Pro). The misacylated Cys-tRNA(Pro) is not edited by ProRS. This chain is Proline--tRNA ligase, found in Klebsiella pneumoniae (strain 342).